Here is a 238-residue protein sequence, read N- to C-terminus: Uridylate kinase (238 aa).

12-15 (KLSG) contributes to the ATP binding site. Glycine 54 is a UMP binding site. Residues glycine 55 and arginine 59 each coordinate ATP. Residues aspartate 74 and 135-142 (TGNPFFTT) each bind UMP. 3 residues coordinate ATP: threonine 162, tyrosine 168, and aspartate 171.

Belongs to the UMP kinase family. In terms of assembly, homohexamer.

It localises to the cytoplasm. It carries out the reaction UMP + ATP = UDP + ADP. It participates in pyrimidine metabolism; CTP biosynthesis via de novo pathway; UDP from UMP (UMPK route): step 1/1. Its activity is regulated as follows. Inhibited by UTP. Its function is as follows. Catalyzes the reversible phosphorylation of UMP to UDP. In Herminiimonas arsenicoxydans, this protein is Uridylate kinase.